The sequence spans 120 residues: Immunoglobulin kappa variable 2-30 (120 aa).

The signal sequence occupies residues methionine 1–glycine 20. A framework-1 region spans residues aspartate 21–cysteine 43. An Ig-like domain is found at aspartate 21–proline 120. Cysteine 43 and cysteine 113 form a disulfide bridge. The tract at residues arginine 44 to asparagine 59 is complementarity-determining-1. Residues tryptophan 60 to tyrosine 74 are framework-2. Residues lysine 75–serine 81 are complementarity-determining-2. The segment at glycine 82–cysteine 113 is framework-3. Positions methionine 114–proline 120 are complementarity-determining-3.

In terms of assembly, immunoglobulins are composed of two identical heavy chains and two identical light chains; disulfide-linked.

Its subcellular location is the secreted. It is found in the cell membrane. V region of the variable domain of immunoglobulin light chains that participates in the antigen recognition. Immunoglobulins, also known as antibodies, are membrane-bound or secreted glycoproteins produced by B lymphocytes. In the recognition phase of humoral immunity, the membrane-bound immunoglobulins serve as receptors which, upon binding of a specific antigen, trigger the clonal expansion and differentiation of B lymphocytes into immunoglobulins-secreting plasma cells. Secreted immunoglobulins mediate the effector phase of humoral immunity, which results in the elimination of bound antigens. The antigen binding site is formed by the variable domain of one heavy chain, together with that of its associated light chain. Thus, each immunoglobulin has two antigen binding sites with remarkable affinity for a particular antigen. The variable domains are assembled by a process called V-(D)-J rearrangement and can then be subjected to somatic hypermutations which, after exposure to antigen and selection, allow affinity maturation for a particular antigen. The protein is Immunoglobulin kappa variable 2-30 of Homo sapiens (Human).